A 287-amino-acid chain; its full sequence is Large ribosomal subunit protein uL2 (287 aa).

The segment at 221–287 is disordered; the sequence is RGSVMNPCDH…SKRSRGGRDS (67 aa). Residues 258–287 are compositionally biased toward basic residues; that stretch reads KTRKRNKPSNKFVLRKRRKTSKRSRGGRDS.

This sequence belongs to the universal ribosomal protein uL2 family. Part of the 50S ribosomal subunit. Forms a bridge to the 30S subunit in the 70S ribosome.

Its function is as follows. One of the primary rRNA binding proteins. Required for association of the 30S and 50S subunits to form the 70S ribosome, for tRNA binding and peptide bond formation. It has been suggested to have peptidyltransferase activity; this is somewhat controversial. Makes several contacts with the 16S rRNA in the 70S ribosome. The protein is Large ribosomal subunit protein uL2 of Synechococcus sp. (strain RCC307).